A 373-amino-acid chain; its full sequence is Phosphoserine aminotransferase (373 aa).

Arg-46 is an L-glutamate binding site. Pyridoxal 5'-phosphate contacts are provided by Phe-104, Thr-150, Asp-172, and Gln-195. Position 196 is an N6-(pyridoxal phosphate)lysine (Lys-196). Position 247–248 (247–248 (NT)) interacts with pyridoxal 5'-phosphate.

This sequence belongs to the class-V pyridoxal-phosphate-dependent aminotransferase family. SerC subfamily. Homodimer. The cofactor is pyridoxal 5'-phosphate.

The protein localises to the cytoplasm. The enzyme catalyses O-phospho-L-serine + 2-oxoglutarate = 3-phosphooxypyruvate + L-glutamate. The catalysed reaction is 4-(phosphooxy)-L-threonine + 2-oxoglutarate = (R)-3-hydroxy-2-oxo-4-phosphooxybutanoate + L-glutamate. Its pathway is amino-acid biosynthesis; L-serine biosynthesis; L-serine from 3-phospho-D-glycerate: step 2/3. It participates in cofactor biosynthesis; pyridoxine 5'-phosphate biosynthesis; pyridoxine 5'-phosphate from D-erythrose 4-phosphate: step 3/5. Its function is as follows. Catalyzes the reversible conversion of 3-phosphohydroxypyruvate to phosphoserine and of 3-hydroxy-2-oxo-4-phosphonooxybutanoate to phosphohydroxythreonine. In Rhodococcus opacus (strain B4), this protein is Phosphoserine aminotransferase.